A 366-amino-acid polypeptide reads, in one-letter code: Histone-lysine N-methyltransferase SETD7 (366 aa).

MORN repeat units follow at residues 36–58 (FEGHFVHGEKNGRGKFYFFDGST), 59–81 (LEGFYVDDALQGQGIYTYEDGGS), and 106–128 (FKGQYKDNVRHGVCWIYYPDGGS). The SET domain maps to 214-336 (ERVYVNDSLI…KDEELTVAYG (123 aa)). S-adenosyl-L-methionine-binding positions include 226-228 (AGE), asparagine 296, and histidine 297.

Belongs to the class V-like SAM-binding methyltransferase superfamily. Histone-lysine methyltransferase family. SET7 subfamily.

Its subcellular location is the nucleus. The protein resides in the chromosome. It carries out the reaction L-lysyl(4)-[histone H3] + S-adenosyl-L-methionine = N(6)-methyl-L-lysyl(4)-[histone H3] + S-adenosyl-L-homocysteine + H(+). The catalysed reaction is L-lysyl-[protein] + S-adenosyl-L-methionine = N(6)-methyl-L-lysyl-[protein] + S-adenosyl-L-homocysteine + H(+). Histone methyltransferase that specifically monomethylates 'Lys-4' of histone H3. H3 'Lys-4' methylation represents a specific tag for epigenetic transcriptional activation. Plays a central role in the transcriptional activation of genes. Also has methyltransferase activity toward non-histone proteins. This is Histone-lysine N-methyltransferase SETD7 (setd7) from Xenopus tropicalis (Western clawed frog).